A 274-amino-acid chain; its full sequence is Glucosamine-6-phosphate deaminase (274 aa).

Residue D71 is the Proton acceptor; for enolization step of the active site. The active-site For ring-opening step is the D140. Residue H142 is the Proton acceptor; for ring-opening step of the active site. Catalysis depends on E147, which acts as the For ring-opening step.

The protein belongs to the glucosamine/galactosamine-6-phosphate isomerase family. NagB subfamily.

The enzyme catalyses alpha-D-glucosamine 6-phosphate + H2O = beta-D-fructose 6-phosphate + NH4(+). The protein operates within amino-sugar metabolism; N-acetylneuraminate degradation; D-fructose 6-phosphate from N-acetylneuraminate: step 5/5. In terms of biological role, catalyzes the reversible isomerization-deamination of glucosamine 6-phosphate (GlcN6P) to form fructose 6-phosphate (Fru6P) and ammonium ion. The protein is Glucosamine-6-phosphate deaminase of Fusobacterium nucleatum subsp. nucleatum (strain ATCC 25586 / DSM 15643 / BCRC 10681 / CIP 101130 / JCM 8532 / KCTC 2640 / LMG 13131 / VPI 4355).